Consider the following 151-residue polypeptide: MKVILRNNVATLGDAGEVVAVKNGYANNFLIPQGMAIRATEGTLKALETEKKQQTKKIELQRKHAREHAQTIEQMSLKVYAKAGDSGKLFGTVTSADIADALKAQGIDIDRRKITIEAPIKSLGKYEADAKIFQDITVKVHFEVEAEGSEA.

This sequence belongs to the bacterial ribosomal protein bL9 family.

Binds to the 23S rRNA. In Pelodictyon phaeoclathratiforme (strain DSM 5477 / BU-1), this protein is Large ribosomal subunit protein bL9.